The primary structure comprises 234 residues: BTB/POZ domain-containing protein KCTD5 (234 aa).

Residue Ala2 is modified to N-acetylalanine. Ser10 carries the post-translational modification Phosphoserine. The region spanning 44–146 (KWVRLNVGGT…LVKDKIRERD (103 aa)) is the BTB domain. The interval 213–234 (PYGTASEPSEKAKILQERGSRM) is disordered. Residues 220 to 234 (PSEKAKILQERGSRM) show a composition bias toward basic and acidic residues.

Homopentamer. Interacts (via C-terminus) with GRASP55/GORASP2. Interacts with CUL3 and with ubiquitinated proteins. Interacts with CRY1. As to quaternary structure, (Microbial infection) Interacts with adeno-associated virus 2 (AAV-2) REP proteins.

The protein resides in the cytoplasm. It localises to the cytosol. It is found in the nucleus. Its function is as follows. Its interaction with CUL3 suggests that it may act as a substrate adapter in some E3 ligase complex. Does not affect the function of Kv channel Kv2.1/KCNB1, Kv1.2/KCNA2, Kv4.2/KCND2 and Kv3.4/KCNC4. This chain is BTB/POZ domain-containing protein KCTD5 (KCTD5), found in Homo sapiens (Human).